The chain runs to 651 residues: Probable inactive purple acid phosphatase 9 (651 aa).

The N-terminal stretch at Met1 to Ser20 is a signal peptide. N-linked (GlcNAc...) asparagine glycans are attached at residues Asn32, Asn96, and Asn202. Fe cation-binding residues include Asp305 and Tyr308. Asp305 provides a ligand contact to Zn(2+). Asn338 lines the Zn(2+) pocket. Asn338 is a substrate binding site. 2 N-linked (GlcNAc...) asparagine glycosylation sites follow: Asn378 and Asn432. His444 is a binding site for Zn(2+). The N-linked (GlcNAc...) asparagine glycan is linked to Asn475. A Zn(2+)-binding site is contributed by His483. His483–His485 is a substrate binding site. Position 485 (His485) interacts with Fe cation. 2 N-linked (GlcNAc...) asparagine glycosylation sites follow: Asn495 and Asn640.

It belongs to the metallophosphoesterase superfamily. Purple acid phosphatase family. In terms of assembly, homodimer. Fe cation serves as cofactor. Zn(2+) is required as a cofactor. In terms of tissue distribution, expressed in roots, stems, leaves, flowers and siliques.

Its subcellular location is the secreted. The protein is Probable inactive purple acid phosphatase 9 (PAP9) of Arabidopsis thaliana (Mouse-ear cress).